Consider the following 397-residue polypeptide: MNNEYVLVINSGSSSLKFAVIDSVSGDAVLSGLGECFGLEDARMSWKYQGQKTEIAIEGNENHHKIAIGKLVGLTEELGFTDGIVAIGHRIVHGGEKFTKTVRINEEVTKEIESLSDLAPLHNPAGAIGIRAAVEAFPSLPQFAVFDTAFHQTMPKRAYTGAIAKELYTDFGVRRYGFHGTSHYFVSREAAKMINKPIEESNFISVHLGNGASVCAIKDGNSVDTSMGFTPLSGLMMGTRCGDLDPGIIEYLLKKGWSQEQVFNSLNKESGFLGVSGLTSDARGILEAMEEGHEGATLAFQVFTYRVAKYVASYLAALDSLDGIIFTGGIGENSLPIRREILSNLKILGFVEDVAGNEGARFGADGIIAKSEMLNAVAMVIPTNEEFVIAQQSVELL.

Residue Asn-10 coordinates Mg(2+). Lys-17 is an ATP binding site. Position 90 (Arg-90) interacts with substrate. Residue Asp-147 is the Proton donor/acceptor of the active site. Residues 207 to 211 (HLGNG), 281 to 283 (DAR), and 329 to 333 (GIGEN) contribute to the ATP site. Glu-385 lines the Mg(2+) pocket.

The protein belongs to the acetokinase family. Homodimer. It depends on Mg(2+) as a cofactor. Mn(2+) serves as cofactor.

The protein localises to the cytoplasm. The enzyme catalyses acetate + ATP = acetyl phosphate + ADP. The protein operates within metabolic intermediate biosynthesis; acetyl-CoA biosynthesis; acetyl-CoA from acetate: step 1/2. In terms of biological role, catalyzes the formation of acetyl phosphate from acetate and ATP. Can also catalyze the reverse reaction. The chain is Acetate kinase 2 from Aliivibrio fischeri (strain ATCC 700601 / ES114) (Vibrio fischeri).